Here is a 397-residue protein sequence, read N- to C-terminus: 8-amino-7-oxononanoate synthase (397 aa).

Residue Arg21 coordinates substrate. 110-111 (GY) serves as a coordination point for pyridoxal 5'-phosphate. His135 lines the substrate pocket. The pyridoxal 5'-phosphate site is built by Ser181, His209, and Thr238. Lys241 bears the N6-(pyridoxal phosphate)lysine mark. Thr355 serves as a coordination point for substrate.

The protein belongs to the class-II pyridoxal-phosphate-dependent aminotransferase family. BioF subfamily. Homodimer. The cofactor is pyridoxal 5'-phosphate.

It carries out the reaction 6-carboxyhexanoyl-[ACP] + L-alanine + H(+) = (8S)-8-amino-7-oxononanoate + holo-[ACP] + CO2. The protein operates within cofactor biosynthesis; biotin biosynthesis. In terms of biological role, catalyzes the decarboxylative condensation of pimeloyl-[acyl-carrier protein] and L-alanine to produce 8-amino-7-oxononanoate (AON), [acyl-carrier protein], and carbon dioxide. The chain is 8-amino-7-oxononanoate synthase from Saccharophagus degradans (strain 2-40 / ATCC 43961 / DSM 17024).